A 448-amino-acid chain; its full sequence is Chromosomal replication initiator protein DnaA (448 aa).

Residues 1–73 form a domain I, interacts with DnaA modulators region; it reads MNTHLTETWE…VNALKLLTSK (73 aa). Residues 73–109 are domain II; sequence KKYNIDFIVTTEEKIEENQKNHNNEKSNIVVNDEMST. Positions 110–326 are domain III, AAA+ region; it reads MLNPKYTFDS…GALIRIVAFS (217 aa). Residues G154, G156, K157, and T158 each coordinate ATP. The domain IV, binds dsDNA stretch occupies residues 327–448; that stretch reads SLTNKEISID…KELNKRINQK (122 aa).

Belongs to the DnaA family. Oligomerizes as a right-handed, spiral filament on DNA at oriC.

The protein resides in the cytoplasm. Its function is as follows. Plays an essential role in the initiation and regulation of chromosomal replication. ATP-DnaA binds to the origin of replication (oriC) to initiate formation of the DNA replication initiation complex once per cell cycle. Binds the DnaA box (a 9 base pair repeat at the origin) and separates the double-stranded (ds)DNA. Forms a right-handed helical filament on oriC DNA; dsDNA binds to the exterior of the filament while single-stranded (ss)DNA is stabiized in the filament's interior. The ATP-DnaA-oriC complex binds and stabilizes one strand of the AT-rich DNA unwinding element (DUE), permitting loading of DNA polymerase. After initiation quickly degrades to an ADP-DnaA complex that is not apt for DNA replication. Binds acidic phospholipids. This chain is Chromosomal replication initiator protein DnaA, found in Clostridium botulinum (strain ATCC 19397 / Type A).